The primary structure comprises 117 residues: Succinate dehydrogenase hydrophobic membrane anchor subunit (117 aa).

At 1-15 (MVEMESAKSVLEPLA) the chain is on the cytoplasmic side. Residues 16 to 36 (WLMQMITGLLMILLVTAHFYV) form a helical membrane-spanning segment. Residues 37-61 (THMTTHDALRYAEVVERVAQPEFKA) lie on the Extracellular side of the membrane. The chain crosses the membrane as a helical span at residues 62–82 (LYALLLLAVSFHAFNGLRAIL). Histidine 73 is a heme binding site. Residues 83–92 (LDTNAGMRKK) lie on the Cytoplasmic side of the membrane. The helical transmembrane segment at 93 to 115 (GAVSALTTLAFLLAFFYGLYLLF) threads the bilayer.

Part of an enzyme complex containing four subunits: a flavoprotein, an iron-sulfur protein, plus two membrane-anchoring proteins, SdhC and SdhD. Heme serves as cofactor.

The protein resides in the cell membrane. It functions in the pathway carbohydrate metabolism; tricarboxylic acid cycle. Functionally, membrane-anchoring subunit of succinate dehydrogenase (SDH). In Archaeoglobus fulgidus (strain ATCC 49558 / DSM 4304 / JCM 9628 / NBRC 100126 / VC-16), this protein is Succinate dehydrogenase hydrophobic membrane anchor subunit (sdhD).